We begin with the raw amino-acid sequence, 481 residues long: Probable Xaa-Pro aminopeptidase PEPP (481 aa).

Positions 265, 276, 399, and 439 each coordinate Mn(2+).

This sequence belongs to the peptidase M24B family. Mn(2+) serves as cofactor.

It carries out the reaction Release of any N-terminal amino acid, including proline, that is linked to proline, even from a dipeptide or tripeptide.. Functionally, catalyzes the removal of a penultimate prolyl residue from the N-termini of peptides. In Uncinocarpus reesii (strain UAMH 1704), this protein is Probable Xaa-Pro aminopeptidase PEPP (PEPP).